Here is a 273-residue protein sequence, read N- to C-terminus: MAKHLYKTPIPSTRKGTLDRQVKSNPRNNLIHGRHRCGKGRNSRGIITASIEGEVIKRLYRKIDFRRNQKDISGRIVTIESDPNRNAYICLIHYGDGEKRYILHPRGAIIGDTIVSGTKVPISMGNALPLTDMPLGTVMHNKENTRGRGGQLARAAGAVAKHKAKEGKMATLRLPSGEGRIVTQNSLATVGQEGKVGVNQKSLGRAGSKCWLGKRPVVRGVVMNPVDHPHGGGEGKAPIGRKKPTTPWGYPALGRRTRKRKKYSDSFILRRRK.

Disordered regions lie at residues 1–25 and 225–253; these read MAKHLYKTPIPSTRKGTLDRQVKSN and PVDHPHGGGEGKAPIGRKKPTTPWGYPAL.

The protein belongs to the universal ribosomal protein uL2 family. In terms of assembly, part of the 50S ribosomal subunit.

It is found in the plastid. Its subcellular location is the chloroplast. This is Large ribosomal subunit protein uL2cz/uL2cy (rpl2-A) from Triticum aestivum (Wheat).